Here is a 221-residue protein sequence, read N- to C-terminus: Transmembrane emp24 domain-containing protein 3 (221 aa).

Positions 1–30 (MGNEVPRASSFQMLMLLLLLLLLRAERLRG) are cleaved as a signal peptide. The Lumenal portion of the chain corresponds to 31 to 184 (AELTFELPDN…RAEDLNSRVS (154 aa)). Positions 42–124 (KQCFHEEVEQ…HKTVYFDFQV (83 aa)) constitute a GOLD domain. R103 is modified (dimethylated arginine). A helical membrane pass occupies residues 185-205 (YWSVGETIALFVVSFSQVLLL). Residues 206–221 (KSFFTEKRPINRAVHS) are Cytoplasmic-facing. The COPII vesicle coat-binding motif lies at 208 to 209 (FF). A COPI vesicle coat-binding motif is present at residues 208–221 (FFTEKRPINRAVHS).

The protein belongs to the EMP24/GP25L family. In terms of assembly, monomer in endoplasmic reticulum, endoplasmic reticulum-Golgi intermediate compartment and cis-Golgi network. Interacts (via C-terminus) with COPG1; the interaction involves dimeric TMED3; however, there are conflicting reports on the interaction. Interacts with GORASP1 and GORASP2.

Its subcellular location is the endoplasmic reticulum-Golgi intermediate compartment membrane. The protein localises to the golgi apparatus. It is found in the cis-Golgi network membrane. It localises to the golgi stack membrane. The protein resides in the endoplasmic reticulum membrane. Its subcellular location is the cytoplasmic vesicle. The protein localises to the COPI-coated vesicle membrane. In terms of biological role, potential role in vesicular protein trafficking, mainly in the early secretory pathway. Contributes to the coupled localization of TMED2 and TMED10 in the cis-Golgi network. This chain is Transmembrane emp24 domain-containing protein 3 (Tmed3), found in Rattus norvegicus (Rat).